The sequence spans 262 residues: Phosphatidylglycerol--prolipoprotein diacylglyceryl transferase (262 aa).

A run of 4 helical transmembrane segments spans residues 9–29 (LGPL…ILAV), 41–61 (IIPD…ILGA), 80–100 (IFAI…GALV), and 109–129 (LINT…AQSL). Residue R131 participates in a 1,2-diacyl-sn-glycero-3-phospho-(1'-sn-glycerol) binding. 3 helical membrane passes run 167 to 187 (QPTF…ILIF), 197 to 217 (GHIT…IEGM), and 226 to 246 (GLRV…MIVI).

Belongs to the Lgt family.

The protein localises to the cell membrane. The catalysed reaction is L-cysteinyl-[prolipoprotein] + a 1,2-diacyl-sn-glycero-3-phospho-(1'-sn-glycerol) = an S-1,2-diacyl-sn-glyceryl-L-cysteinyl-[prolipoprotein] + sn-glycerol 1-phosphate + H(+). The protein operates within protein modification; lipoprotein biosynthesis (diacylglyceryl transfer). Catalyzes the transfer of the diacylglyceryl group from phosphatidylglycerol to the sulfhydryl group of the N-terminal cysteine of a prolipoprotein, the first step in the formation of mature lipoproteins. The protein is Phosphatidylglycerol--prolipoprotein diacylglyceryl transferase of Streptococcus pneumoniae (strain ATCC 700669 / Spain 23F-1).